The chain runs to 465 residues: uncharacterized protein (465 aa).

3 disordered regions span residues M1 to Q55, D70 to Q164, and T221 to V313. A compositionally biased stretch (basic and acidic residues) spans E40–N50. The segment covering E73–K82 has biased composition (polar residues). The span at N83–N134 shows a compositional bias: low complexity. Positions E141–E150 are enriched in basic and acidic residues. The segment covering T221–N235 has biased composition (low complexity). 2 stretches are compositionally biased toward basic and acidic residues: residues V236 to P249 and I259 to K275. The span at I288–K306 shows a compositional bias: polar residues. The stretch at N390–S423 forms a coiled coil.

This is an uncharacterized protein from Acanthamoeba polyphaga mimivirus (APMV).